Reading from the N-terminus, the 245-residue chain is MLIIPAIDLKDGACVRLRQGRMEDSTVFSDDPVAMAAKWVDGGCRRLHLVDLNGAFEGQPVNGDVVTAIARRYPNLPIQIGGGIRSLETIEHYVKAGVSYVIIGTKAVKEPEFVAEACRAFPGKVIVGLDAKDGFVATDGWAEVSSVQVIDLAKRFEADGVSAIVYTDIAKDGMMQGCNIPFTAALAAATRIPVIASGGIHNLGDIQALLNAKAPGIIGAITGRAIYEGTLDVAEAQALCDREQR.

The active-site Proton acceptor is Asp8. Asp130 (proton donor) is an active-site residue.

It belongs to the HisA/HisF family.

It localises to the cytoplasm. The catalysed reaction is 1-(5-phospho-beta-D-ribosyl)-5-[(5-phospho-beta-D-ribosylamino)methylideneamino]imidazole-4-carboxamide = 5-[(5-phospho-1-deoxy-D-ribulos-1-ylimino)methylamino]-1-(5-phospho-beta-D-ribosyl)imidazole-4-carboxamide. It functions in the pathway amino-acid biosynthesis; L-histidine biosynthesis; L-histidine from 5-phospho-alpha-D-ribose 1-diphosphate: step 4/9. This chain is 1-(5-phosphoribosyl)-5-[(5-phosphoribosylamino)methylideneamino] imidazole-4-carboxamide isomerase, found in Pseudomonas savastanoi pv. phaseolicola (strain 1448A / Race 6) (Pseudomonas syringae pv. phaseolicola (strain 1448A / Race 6)).